The sequence spans 123 residues: uncharacterized protein (123 aa).

Thr56 carries the phosphothreonine modification. Ser73, Ser87, Ser97, Ser113, and Ser119 each carry phosphoserine.

In terms of tissue distribution, highly expressed in the kidney (at protein level).

The protein resides in the cytoplasm. This is an uncharacterized protein from Felis catus (Cat).